The following is a 555-amino-acid chain: Hdr-like menaquinol oxidoreductase iron-sulfur subunit 2 (555 aa).

4Fe-4S ferredoxin-type domains lie at R82–K111 and K151–V180. The [4Fe-4S] cluster site is built by C91, C94, C97, C101, C160, C163, C166, and C170.

As to quaternary structure, consists of five subunits: an integral membrane subunit, a cytochrome b-like subunit, a cytochrome c subunit and two iron-sulfur subunits. [4Fe-4S] cluster serves as cofactor.

The protein localises to the cell membrane. In terms of biological role, has menaquinol-oxidizing activity. HmeC and HmeD subunits may together mediate electron transfer from menaquinol to an unidentified electron acceptor on the cytoplasmic side of the membrane. The protein is Hdr-like menaquinol oxidoreductase iron-sulfur subunit 2 (hmeD) of Archaeoglobus fulgidus (strain ATCC 49558 / DSM 4304 / JCM 9628 / NBRC 100126 / VC-16).